The chain runs to 763 residues: Phosphoglycerol transferase I (763 aa).

The next 4 helical transmembrane spans lie at 1–21, 26–46, 77–97, and 108–128; these read MSEL…AWKA, WWFA…ITLF, ILPG…LGWI, and FGYS…SPAF.

This sequence belongs to the OpgB family.

It is found in the cell inner membrane. It carries out the reaction a phosphatidylglycerol + a membrane-derived-oligosaccharide D-glucose = a 1,2-diacyl-sn-glycerol + a membrane-derived-oligosaccharide 6-(glycerophospho)-D-glucose.. It functions in the pathway glycan metabolism; osmoregulated periplasmic glucan (OPG) biosynthesis. Its function is as follows. Transfers a phosphoglycerol residue from phosphatidylglycerol to the membrane-bound nascent glucan backbones. This Escherichia coli (strain UTI89 / UPEC) protein is Phosphoglycerol transferase I.